The following is a 1163-amino-acid chain: Actin cross-linking toxin VgrG1 (1163 aa).

One can recognise an ACD domain in the interval 728–1163; sequence TPDFPTHFPK…NPQEWQRIIA (436 aa). 739 to 743 contacts ATP; that stretch reads SIGIE. Residues Glu743 and Glu805 each coordinate Mg(2+). Ser808 lines the ATP pocket. Mg(2+) is bound at residue Gln889. Arg995 is an ATP binding site. Glu1066 contacts Mg(2+).

It belongs to the VgrG protein family. As to quaternary structure, interacts with protein VC1417. Requires Mg(2+) as cofactor.

Its subcellular location is the secreted. The protein localises to the host cytoplasm. It localises to the host cytosol. In terms of biological role, part of the type VI secretion system (T6SS) specialized secretion system, which delivers several virulence factors in both prokaryotic and eukaryotic cells during infection. Forms the spike at the tip of the elongating tube probably formed by hemolysin co-regulated protein/Hcp. Allows the delivery of the TseL antibacterial toxin to target cells where it exerts its toxicity. Also acts directly as an actin-directed toxin that catalyzes the covalent cross-linking of host cytoplasmic monomeric actin. Mediates the cross-link between 'Lys-50' of one monomer and 'Glu-270' of another actin monomer, resulting in formation of highly toxic actin oligomers that cause cell rounding. The toxin can be highly efficient at very low concentrations by acting on formin homology family proteins: toxic actin oligomers bind with high affinity to formins and adversely affect both nucleation and elongation abilities of formins, causing their potent inhibition in both profilin-dependent and independent manners. Acts as an acid--amino-acid ligase that transfers the gamma-phosphoryl group of ATP to the 'Glu-270' actin residue, resulting in the formation of an activated acyl phosphate intermediate. This intermediate is further hydrolyzed and the energy of hydrolysis is utilized for the formation of the amide bond between actin subunits. This Vibrio cholerae serotype O1 (strain ATCC 39315 / El Tor Inaba N16961) protein is Actin cross-linking toxin VgrG1.